The following is a 197-amino-acid chain: Rac-like GTP-binding protein ARAC1 (197 aa).

13-20 (GDGAVGKT) is a binding site for GTP. Residues 35-43 (YVPTVFDNF) carry the Effector region motif. GTP-binding positions include 60 to 64 (DTAGQ) and 118 to 121 (TKLD). A Cysteine methyl ester modification is found at Cys-194. The S-geranylgeranyl cysteine moiety is linked to residue Cys-194. The propeptide at 195–197 (SIL) is removed in mature form.

Belongs to the small GTPase superfamily. Rho family. In terms of assembly, interacts with SPK1. In terms of tissue distribution, ubiquitous.

The protein resides in the cytoplasm. Its subcellular location is the membrane. Functionally, inactive GDP-bound Rho GTPases reside in the cytosol, are found in a complex with Rho GDP-dissociation inhibitors (Rho GDIs), and are released from the GDI protein in order to translocate to membranes upon activation. In Arabidopsis thaliana (Mouse-ear cress), this protein is Rac-like GTP-binding protein ARAC1 (ARAC1).